A 1379-amino-acid chain; its full sequence is MAERANLVFHNKVIDGTAIKRLISRLIDHFGMAYTSHILDQVKTLGFQQATATSISLGIDDLLTIPSKGWLVQDAEQQSLILEKHHHYGNVHAVEKLRQSIEIWYATSEYLRQEMNPNFRMTDPFNPVHMMSFSGARGNASQVHQLVGMRGLMSDPQGQMIDLPIQSNLREGLSLTEYIISCYGARKGVVDTAVRTSDAGYLTRRLVEVVQHIVVRRTDCGTIRGISVSPRNKNRMMSERIFIQTLIGRVLADDIYIGSRCVAFRNQDLGIGLVNRLITFGTQSISIRTPFTCRSTSWICRLCYGRSPTHGDLVELGEAVGIIAGQSIGEPGTQLTLRTFHTGGVFTGGTAEHVRAPYNGKIKFNEDLVHPTRTRHGHPAFLCYIDLSVIIESEDIIHSVTIPPKSFLLVQNDQYVESEQVIAEIREGTYTFHFKERVRKYIYSDSEGEMHWSTDVSHAPEFTYSNVHLLPKTSHLWILSGGSCGSSLILFSIHKDQDQMNIPFLSVERKSISSFSVNNDQVSKKFVSSDFDDKKKSEIPHYSDLNGNLGTSHYNFIYSAIFHENSDLLAKRRRNRFIIPFQSIQEQEKKFIPHSGISIEIPINGIFRRNSIFAFFDDPRYRRKSSGILKYGTLKADSIIQKEDMIEYRGVQKFKTKYEMKVDRFFFIPEEVHILPESSAIMVQNYSIIGVDTRITLNIRSQVGGLIRVERKKKRIELKIFSGDIHFPDKADKISRHSGILIPPGRGKTNSKESKKLKNWIYVQRITPTKKKFFVLVRPVATYEIADSINLATLFPQDLFQEKDNIQLRVFNYILYGNGKPTRGISDTSIQLVRTCLVLNWDQENNNSSLEEIRAFFVEVSTKGLIRDFIRIGLVKSHISYIRKRNNPSDSGLISADHMNPFYSISPKAGILQQSLRQNHGTIRMFLNRNKESQSLLILSSSNCFRIGPFNHVKYHNVINQSIKKNPLITIKNSLGPLGTAIQISNFYSFLPLLTYNLISVIKYLQLDNLKYIFQVINSYLIDENGRIFNLDPYNNVVLNPFKLNWYFLHQNYHHNYCEETSTIISLGQFFCENVCIAKKEPHLKSGQVLIVQRDSVVIRSAKPYLATPGAKVHGHYREILYEGDTLVTFIYEKSRSGDITQGLPKVEQVLEVRSIDSISLNLEKRIKGWNKSITRILGIPWGFLIGAELTIVQSRISLVNKIQKVYRSQGVQIHNRHIEIIVRQITSKVLVSEEGMSNVFLPGELIGLLRAERTGRALEEAICYRAVLLGITRASLNTQSFISEASFQETARVLAKAALRGRIDWLKGLKENVVLGGVIPAGTGFNKGLVHCSRQHTNILLEKKTKNLSLFERDMRDILFYHREFCDSSISKSDFSRI.

Positions 220, 293, 300, and 303 each coordinate Zn(2+).

The protein belongs to the RNA polymerase beta' chain family. RpoC2 subfamily. In terms of assembly, in plastids the minimal PEP RNA polymerase catalytic core is composed of four subunits: alpha, beta, beta', and beta''. When a (nuclear-encoded) sigma factor is associated with the core the holoenzyme is formed, which can initiate transcription. It depends on Zn(2+) as a cofactor.

Its subcellular location is the plastid. The protein resides in the chloroplast. It carries out the reaction RNA(n) + a ribonucleoside 5'-triphosphate = RNA(n+1) + diphosphate. Functionally, DNA-dependent RNA polymerase catalyzes the transcription of DNA into RNA using the four ribonucleoside triphosphates as substrates. The chain is DNA-directed RNA polymerase subunit beta'' from Nasturtium officinale (Watercress).